Reading from the N-terminus, the 251-residue chain is Short chain dehydrogenase gsfK (251 aa).

The NADP(+) site is built by leucine 14, threonine 33, glutamate 60, asparagine 88, and lysine 122. Catalysis depends on proton donor residues serine 143 and tyrosine 161. Positions 161, 165, 192, and 194 each coordinate NADP(+). The Lowers pKa of active site Tyr role is filled by lysine 165.

Belongs to the short-chain dehydrogenases/reductases (SDR) family.

It participates in secondary metabolite biosynthesis; terpenoid biosynthesis. Functionally, short chain dehydrogenase; part of the gene cluster that mediates the biosynthesis of griseofulvin, an important antifungal drug that has been in use for a long time for treating dermatophyte infections. The first step of the pathway is the formation of the heptaketide backbone by gsfA which is initiated by priming with acetyl-CoA, followed by sequential condensations of 6 malonyl-CoA units. The resulting benzophenone can undergo a spontaneous dehydration to form norlichexanthone. However, the true precursor for the griseofulvin biosynthesis is not norlichexanthone, but the heptaketide benzophenone that is O-methylated at 3-OH by gsfB to produce griseophenone D which is further methylated at 9-OH by gsfC to yield griseophenone C. Griseophenone C is then substrate of halogenase gsfI which is responsible for the regio-specific chlorination at the C13 position to form griseophenone B. The cytochrome P450 gsfF catalyzes the coupling of orcinol and phloroglucinol rings in griseophenone B to form desmethyl-dehydrogriseofulvin A which is further methylated at 5-OH by gsfD to yield dehydrogriseofulvin. Finally, gsfE performs stereospecific reduction of enone 18 of dehydrogriseofulvin to afford the final product griseofulvin. The exact role of gsfK within the pathway has not been identified yet. In Penicillium aethiopicum, this protein is Short chain dehydrogenase gsfK.